Here is a 351-residue protein sequence, read N- to C-terminus: Phosphoribosylformylglycinamidine cyclo-ligase (351 aa).

It belongs to the AIR synthase family.

Its subcellular location is the cytoplasm. It catalyses the reaction 2-formamido-N(1)-(5-O-phospho-beta-D-ribosyl)acetamidine + ATP = 5-amino-1-(5-phospho-beta-D-ribosyl)imidazole + ADP + phosphate + H(+). It participates in purine metabolism; IMP biosynthesis via de novo pathway; 5-amino-1-(5-phospho-D-ribosyl)imidazole from N(2)-formyl-N(1)-(5-phospho-D-ribosyl)glycinamide: step 2/2. This chain is Phosphoribosylformylglycinamidine cyclo-ligase, found in Synechococcus sp. (strain JA-3-3Ab) (Cyanobacteria bacterium Yellowstone A-Prime).